The primary structure comprises 101 residues: Small ribosomal subunit protein bS6 (101 aa).

The protein belongs to the bacterial ribosomal protein bS6 family.

In terms of biological role, binds together with bS18 to 16S ribosomal RNA. The chain is Small ribosomal subunit protein bS6 from Oleidesulfovibrio alaskensis (strain ATCC BAA-1058 / DSM 17464 / G20) (Desulfovibrio alaskensis).